The following is a 396-amino-acid chain: Argininosuccinate synthase (396 aa).

9-17 (AYSGGLDTS) provides a ligand contact to ATP. Y85 is an L-citrulline binding site. G115 is an ATP binding site. Residues T117, N121, and D122 each contribute to the L-aspartate site. L-citrulline is bound at residue N121. The L-citrulline site is built by R125, S173, E258, and Y270.

The protein belongs to the argininosuccinate synthase family. Type 1 subfamily. As to quaternary structure, homotetramer.

The protein resides in the cytoplasm. It catalyses the reaction L-citrulline + L-aspartate + ATP = 2-(N(omega)-L-arginino)succinate + AMP + diphosphate + H(+). It participates in amino-acid biosynthesis; L-arginine biosynthesis; L-arginine from L-ornithine and carbamoyl phosphate: step 2/3. In Streptococcus mutans serotype c (strain ATCC 700610 / UA159), this protein is Argininosuccinate synthase.